Consider the following 503-residue polypeptide: Probable cytosol aminopeptidase (503 aa).

Mn(2+)-binding residues include K270 and D275. The active site involves K282. The Mn(2+) site is built by D293, D352, and E354. Residue R356 is part of the active site.

The protein belongs to the peptidase M17 family. The cofactor is Mn(2+).

It is found in the cytoplasm. The enzyme catalyses Release of an N-terminal amino acid, Xaa-|-Yaa-, in which Xaa is preferably Leu, but may be other amino acids including Pro although not Arg or Lys, and Yaa may be Pro. Amino acid amides and methyl esters are also readily hydrolyzed, but rates on arylamides are exceedingly low.. The catalysed reaction is Release of an N-terminal amino acid, preferentially leucine, but not glutamic or aspartic acids.. Functionally, presumably involved in the processing and regular turnover of intracellular proteins. Catalyzes the removal of unsubstituted N-terminal amino acids from various peptides. The chain is Probable cytosol aminopeptidase from Klebsiella pneumoniae (strain 342).